Consider the following 169-residue polypeptide: Peptide deformylase (169 aa).

Cysteine 91 and histidine 133 together coordinate Fe cation. The active site involves glutamate 134. Histidine 137 is a Fe cation binding site.

This sequence belongs to the polypeptide deformylase family. The cofactor is Fe(2+).

It catalyses the reaction N-terminal N-formyl-L-methionyl-[peptide] + H2O = N-terminal L-methionyl-[peptide] + formate. In terms of biological role, removes the formyl group from the N-terminal Met of newly synthesized proteins. Requires at least a dipeptide for an efficient rate of reaction. N-terminal L-methionine is a prerequisite for activity but the enzyme has broad specificity at other positions. This is Peptide deformylase from Salmonella typhi.